We begin with the raw amino-acid sequence, 811 residues long: TLR4 interactor with leucine rich repeats (811 aa).

The signal sequence occupies residues 1–25 (MEAARALRLLLVVCGCLALPPLAEP). The 32-residue stretch at 26-57 (VCPERCDCQHPQHLLCTNRGLRVVPKTSSLPS) folds into the LRRNT domain. Over 26–696 (VCPERCDCQH…AGSRGGVDYQ (671 aa)) the chain is Extracellular. LRR repeat units lie at residues 61 to 81 (VLTY…DFHR), 84 to 105 (QLRR…TFEK), 108 to 129 (RLEE…TLAP), 132 to 153 (KLRI…SFEG), 156 to 177 (SLVK…VFAP), 180 to 201 (NLLY…AFAQ), 204 to 223 (KLRF…RHAA), 230 to 251 (SLSS…IFQH), 254 to 275 (RLGL…AFWG), 278 to 299 (ALRE…LLEP), 302 to 323 (SLEA…TFGH), and 326 to 347 (RLRE…IFAA). A glycan (N-linked (GlcNAc...) asparagine) is linked at Asn73. A glycan (N-linked (GlcNAc...) asparagine) is linked at Asn209. The region spanning 359-416 (NGWTCDCRLRGLKRWMGDWHSQGRLLTVFVQCRHPPALRGKYLDYLDDQQLQNGSCAD) is the LRRCT domain. The interval 484-549 (LSRRGPGLQQ…PSPAGDPWQR (66 aa)) is disordered. Composition is skewed to low complexity over residues 492 to 508 (QQPS…APQS) and 530 to 544 (PTPT…SPAG). An N-linked (GlcNAc...) asparagine glycan is attached at Asn589. A helical membrane pass occupies residues 697–717 (LLTLALLTVNALLVLLALAAW). Residues 718–811 (ASRWLRRKLR…EDRLLQRFAD (94 aa)) lie on the Cytoplasmic side of the membrane. Ser798 carries the post-translational modification Phosphoserine.

As to quaternary structure, belongs to the lipopolysaccharide (LPS) receptor, a multi-protein complex containing at least CD14, MD-2 and TLR4. Interacts with TLR4; this interaction is greatly enhanced by LPS stimulation. Interacts with LPS. Post-translationally, N-glycolysaled. In terms of tissue distribution, highly expressed in the brain, ovary, small intestine and spleen.

The protein resides in the membrane. Functionally, component of the TLR4 signaling complex. Mediates the innate immune response to bacterial lipopolysaccharide (LPS) leading to cytokine secretion. This Homo sapiens (Human) protein is TLR4 interactor with leucine rich repeats (TRIL).